We begin with the raw amino-acid sequence, 212 residues long: Large ribosomal subunit protein uL3 (212 aa).

The interval methionine 135–glycine 161 is disordered. Residue glutamine 153 is modified to N5-methylglutamine.

Belongs to the universal ribosomal protein uL3 family. In terms of assembly, part of the 50S ribosomal subunit. Forms a cluster with proteins L14 and L19. In terms of processing, methylated by PrmB.

In terms of biological role, one of the primary rRNA binding proteins, it binds directly near the 3'-end of the 23S rRNA, where it nucleates assembly of the 50S subunit. This is Large ribosomal subunit protein uL3 from Alteromonas mediterranea (strain DSM 17117 / CIP 110805 / LMG 28347 / Deep ecotype).